Here is a 587-residue protein sequence, read N- to C-terminus: Glutamine--tRNA ligase (587 aa).

The 'HIGH' region signature appears at 58–68 (PEPNGYLHIGH). ATP-binding positions include 59–61 (EPN) and 65–71 (HIGHAKS). Residues Asp91 and Tyr240 each coordinate L-glutamine. Residues Thr259 and 294 to 295 (RL) each bind ATP. The 'KMSKS' region motif lies at 301 to 305 (VTSKR).

Belongs to the class-I aminoacyl-tRNA synthetase family. As to quaternary structure, monomer.

It is found in the cytoplasm. It catalyses the reaction tRNA(Gln) + L-glutamine + ATP = L-glutaminyl-tRNA(Gln) + AMP + diphosphate. This is Glutamine--tRNA ligase from Bordetella bronchiseptica (strain ATCC BAA-588 / NCTC 13252 / RB50) (Alcaligenes bronchisepticus).